A 312-amino-acid chain; its full sequence is DNA-directed RNA polymerase subunit alpha (312 aa).

The segment at 1-229 is alpha N-terminal domain (alpha-NTD); the sequence is MLQYQIDRIE…ELFQPLATVT (229 aa). The tract at residues 246–312 is alpha C-terminal domain (alpha-CTD); sequence IPLEELNLSV…ISIPQSRTSA (67 aa).

It belongs to the RNA polymerase alpha chain family. In cyanobacteria the RNAP catalytic core is composed of 2 alpha, 1 beta, 1 beta', 1 gamma and 1 omega subunit. When a sigma factor is associated with the core the holoenzyme is formed, which can initiate transcription.

The catalysed reaction is RNA(n) + a ribonucleoside 5'-triphosphate = RNA(n+1) + diphosphate. Its function is as follows. DNA-dependent RNA polymerase catalyzes the transcription of DNA into RNA using the four ribonucleoside triphosphates as substrates. The chain is DNA-directed RNA polymerase subunit alpha from Parasynechococcus marenigrum (strain WH8102).